A 648-amino-acid polypeptide reads, in one-letter code: Probable ATP-dependent RNA helicase DDX43 (648 aa).

Residues 1–60 are disordered; the sequence is MSHHGGAPKASTWVVASRRSSTVSRAPERRPAEELNRTGPEGYSVGRGGRWRGTSRPPEA. Over residues 10–25 the composition is skewed to low complexity; that stretch reads ASTWVVASRRSSTVSR. A compositionally biased stretch (basic and acidic residues) spans 26–36; that stretch reads APERRPAEELN. A KH domain is found at 67 to 128; the sequence is ELPLCFALKS…AMQTKAKAVI (62 aa). The Q motif signature appears at 242 to 270; sequence TFDDAFQCYPEVMENIKKAGFQKPTPIQS. The Helicase ATP-binding domain occupies 273-448; sequence WPIVLQGIDL…QSYLKEPMIV (176 aa). 286–293 lines the ATP pocket; the sequence is AQTGTGKT. Residues 396–399 carry the DEAD box motif; the sequence is DEAD. A Helicase C-terminal domain is found at 460-621; the sequence is SVKQNIIVTT…SIPEELVSMA (162 aa). Residues 628–641 are compositionally biased toward basic and acidic residues; it reads QQKREMERKMERPQ. Positions 628–648 are disordered; sequence QQKREMERKMERPQGRPKKFH.

This sequence belongs to the DEAD box helicase family. As to expression, expressed in testis. Expressed in many tumors of various histological types at a level that is 100-fold higher than the level observed in normal tissues except testis.

It carries out the reaction ATP + H2O = ADP + phosphate + H(+). The sequence is that of Probable ATP-dependent RNA helicase DDX43 (DDX43) from Homo sapiens (Human).